The sequence spans 247 residues: MPFSPQELLYEGKAKRIYRTADPRVYLCQYKDDATAFNAQKRGSIAGKGEVNCTVSSHVFAYLAQQGIPNHFLAQTGPTEMQVRALHILPLEVVVRNRTAGSLCKRLGLEQGLPIQPPLVEFYYKNDALGDPLVTPDHIRLLQLATPEQVERLGSLALAINNHLQAFWRSCRLELVDFKLEFGLDEKGEILLADEISPDTCRLWDRGGSEPRVLDKDLFRFDLGDPVAGYQEVLQRVLQAVGSQFLL.

Belongs to the SAICAR synthetase family.

The catalysed reaction is 5-amino-1-(5-phospho-D-ribosyl)imidazole-4-carboxylate + L-aspartate + ATP = (2S)-2-[5-amino-1-(5-phospho-beta-D-ribosyl)imidazole-4-carboxamido]succinate + ADP + phosphate + 2 H(+). It participates in purine metabolism; IMP biosynthesis via de novo pathway; 5-amino-1-(5-phospho-D-ribosyl)imidazole-4-carboxamide from 5-amino-1-(5-phospho-D-ribosyl)imidazole-4-carboxylate: step 1/2. The polypeptide is Phosphoribosylaminoimidazole-succinocarboxamide synthase (Synechococcus sp. (strain JA-2-3B'a(2-13)) (Cyanobacteria bacterium Yellowstone B-Prime)).